We begin with the raw amino-acid sequence, 67 residues long: UPF0434 protein Bphy_0537 (67 aa).

Belongs to the UPF0434 family.

In Paraburkholderia phymatum (strain DSM 17167 / CIP 108236 / LMG 21445 / STM815) (Burkholderia phymatum), this protein is UPF0434 protein Bphy_0537.